A 110-amino-acid polypeptide reads, in one-letter code: Nucleoid-associated protein SYO3AOP1_1366 (110 aa).

It belongs to the YbaB/EbfC family. As to quaternary structure, homodimer.

The protein localises to the cytoplasm. Its subcellular location is the nucleoid. Its function is as follows. Binds to DNA and alters its conformation. May be involved in regulation of gene expression, nucleoid organization and DNA protection. The protein is Nucleoid-associated protein SYO3AOP1_1366 of Sulfurihydrogenibium sp. (strain YO3AOP1).